The chain runs to 229 residues: MYYEVVIPAAGQGKRMKAGRNKLFIELKRMPVIIHTLKVFDAHAQCKRMILAINEEERQDFERLLKVHAFQTPVSLVNGGEERQQSVYEGLKAVKDADIVLVHDGARPFIKHTQIDLLVKAAIEKGSAVVAVPVKDTIKRVQEGKVEQTIERQSLWAVQTPQAFRHSILKEAHEYAERTGFLGTDDASLVEQLHGENVYIVQGDYTNIKLTTPDDLLVAKAIMDAERGY.

It belongs to the IspD/TarI cytidylyltransferase family. IspD subfamily.

It carries out the reaction 2-C-methyl-D-erythritol 4-phosphate + CTP + H(+) = 4-CDP-2-C-methyl-D-erythritol + diphosphate. It participates in isoprenoid biosynthesis; isopentenyl diphosphate biosynthesis via DXP pathway; isopentenyl diphosphate from 1-deoxy-D-xylulose 5-phosphate: step 2/6. Its function is as follows. Catalyzes the formation of 4-diphosphocytidyl-2-C-methyl-D-erythritol from CTP and 2-C-methyl-D-erythritol 4-phosphate (MEP). The protein is 2-C-methyl-D-erythritol 4-phosphate cytidylyltransferase of Bacillus pumilus (strain SAFR-032).